The following is a 320-amino-acid chain: Ferrochelatase (320 aa).

Histidine 194 and glutamate 275 together coordinate Fe cation.

It belongs to the ferrochelatase family. Monomer.

The protein resides in the cytoplasm. It carries out the reaction heme b + 2 H(+) = protoporphyrin IX + Fe(2+). Its pathway is porphyrin-containing compound metabolism; protoheme biosynthesis; protoheme from protoporphyrin-IX: step 1/1. Functionally, catalyzes the ferrous insertion into protoporphyrin IX. This is Ferrochelatase from Shigella boydii serotype 4 (strain Sb227).